Reading from the N-terminus, the 160-residue chain is Deoxyuridine 5'-triphosphate nucleotidohydrolase (160 aa).

Substrate-binding positions include 76-78 (RSG), asparagine 89, and 93-95 (TID). The segment covering 139-149 (HTLSDTERGED) has biased composition (basic and acidic residues). The segment at 139 to 160 (HTLSDTERGEDGFGSTGHGSHQ) is disordered. A compositionally biased stretch (gly residues) spans 150–160 (GFGSTGHGSHQ).

The protein belongs to the dUTPase family. The cofactor is Mg(2+).

The enzyme catalyses dUTP + H2O = dUMP + diphosphate + H(+). It participates in pyrimidine metabolism; dUMP biosynthesis; dUMP from dCTP (dUTP route): step 2/2. Its function is as follows. This enzyme is involved in nucleotide metabolism: it produces dUMP, the immediate precursor of thymidine nucleotides and it decreases the intracellular concentration of dUTP so that uracil cannot be incorporated into DNA. This Beijerinckia indica subsp. indica (strain ATCC 9039 / DSM 1715 / NCIMB 8712) protein is Deoxyuridine 5'-triphosphate nucleotidohydrolase.